Here is a 462-residue protein sequence, read N- to C-terminus: tRNA-2-methylthio-N(6)-dimethylallyladenosine synthase (462 aa).

One can recognise an MTTase N-terminal domain in the interval 18–138 (RKVFVKTYGC…LPNALARVRS (121 aa)). [4Fe-4S] cluster-binding residues include C27, C63, C101, C179, C183, and C186. Residues 165 to 397 (RKRGVSAFLT…QALLSEQQYA (233 aa)) enclose the Radical SAM core domain. Residues 400-462 (DSMIGREMDV…TNSLIAQKLA (63 aa)) enclose the TRAM domain.

It belongs to the methylthiotransferase family. MiaB subfamily. Monomer. It depends on [4Fe-4S] cluster as a cofactor.

The protein localises to the cytoplasm. The enzyme catalyses N(6)-dimethylallyladenosine(37) in tRNA + (sulfur carrier)-SH + AH2 + 2 S-adenosyl-L-methionine = 2-methylsulfanyl-N(6)-dimethylallyladenosine(37) in tRNA + (sulfur carrier)-H + 5'-deoxyadenosine + L-methionine + A + S-adenosyl-L-homocysteine + 2 H(+). Catalyzes the methylthiolation of N6-(dimethylallyl)adenosine (i(6)A), leading to the formation of 2-methylthio-N6-(dimethylallyl)adenosine (ms(2)i(6)A) at position 37 in tRNAs that read codons beginning with uridine. This chain is tRNA-2-methylthio-N(6)-dimethylallyladenosine synthase, found in Brucella anthropi (strain ATCC 49188 / DSM 6882 / CCUG 24695 / JCM 21032 / LMG 3331 / NBRC 15819 / NCTC 12168 / Alc 37) (Ochrobactrum anthropi).